A 394-amino-acid polypeptide reads, in one-letter code: Elongation factor Tu (394 aa).

Residues 10-204 form the tr-type G domain; it reads KPHVNIGTIG…AVDEYIPTPD (195 aa). Positions 19 to 26 are G1; sequence GHIDHGKT. Residue 19-26 coordinates GTP; it reads GHIDHGKT. Thr26 lines the Mg(2+) pocket. A G2 region spans residues 60–64; that stretch reads GITIN. The interval 81 to 84 is G3; that stretch reads DCPG. Residues 81–85 and 136–139 contribute to the GTP site; these read DCPGH and NKCD. Residues 136–139 form a G4 region; that stretch reads NKCD. Positions 174-176 are G5; it reads SAL.

The protein belongs to the TRAFAC class translation factor GTPase superfamily. Classic translation factor GTPase family. EF-Tu/EF-1A subfamily. Monomer.

It localises to the cytoplasm. The enzyme catalyses GTP + H2O = GDP + phosphate + H(+). In terms of biological role, GTP hydrolase that promotes the GTP-dependent binding of aminoacyl-tRNA to the A-site of ribosomes during protein biosynthesis. The protein is Elongation factor Tu of Mycoplasmoides gallisepticum (strain R(low / passage 15 / clone 2)) (Mycoplasma gallisepticum).